Reading from the N-terminus, the 104-residue chain is Phosphoribosyl-ATP pyrophosphatase (104 aa).

Belongs to the PRA-PH family.

The protein resides in the cytoplasm. The enzyme catalyses 1-(5-phospho-beta-D-ribosyl)-ATP + H2O = 1-(5-phospho-beta-D-ribosyl)-5'-AMP + diphosphate + H(+). It functions in the pathway amino-acid biosynthesis; L-histidine biosynthesis; L-histidine from 5-phospho-alpha-D-ribose 1-diphosphate: step 2/9. The polypeptide is Phosphoribosyl-ATP pyrophosphatase (Methanosarcina barkeri (strain Fusaro / DSM 804)).